A 343-amino-acid polypeptide reads, in one-letter code: MIKVGIVGGSGYGAIELIRLLQTHPHVTIAHIYSHSKVDEPLKLTFPHLQHIMQHFEALTVDNNDCDVIFFATPAPVSKTCIPPLVEKGIHVIDLSGAFRIKNREIYEAYYKETAAAQDDLNHAIYSISEWQSFDNNGTKLISNPGCFPTATLLALHPLISEKIVDLSSIIIDAKTGVSGAGRSLSQRVHFSEMNENLSAYAIGNHKHKPEIEQYLSIIAGQDVSVIFTPHLVPMTRGILSTIYVKFSSEYTTESLHKLMTSYYANQPFVRIRDIGTFPTTKEVLGSNYCDIGIYVDETTQTAILVSVIDNLVKGASGQAIQNLNILYDFEVTTGLNQSPVYP.

Cys-147 is an active-site residue.

It belongs to the NAGSA dehydrogenase family. Type 1 subfamily.

The protein resides in the cytoplasm. The enzyme catalyses N-acetyl-L-glutamate 5-semialdehyde + phosphate + NADP(+) = N-acetyl-L-glutamyl 5-phosphate + NADPH + H(+). It participates in amino-acid biosynthesis; L-arginine biosynthesis; N(2)-acetyl-L-ornithine from L-glutamate: step 3/4. Its function is as follows. Catalyzes the NADPH-dependent reduction of N-acetyl-5-glutamyl phosphate to yield N-acetyl-L-glutamate 5-semialdehyde. The polypeptide is N-acetyl-gamma-glutamyl-phosphate reductase (Staphylococcus aureus (strain Mu3 / ATCC 700698)).